The following is a 438-amino-acid chain: Thymidine phosphorylase (438 aa).

This sequence belongs to the thymidine/pyrimidine-nucleoside phosphorylase family. As to quaternary structure, homodimer.

It carries out the reaction thymidine + phosphate = 2-deoxy-alpha-D-ribose 1-phosphate + thymine. It functions in the pathway pyrimidine metabolism; dTMP biosynthesis via salvage pathway; dTMP from thymine: step 1/2. Functionally, the enzymes which catalyze the reversible phosphorolysis of pyrimidine nucleosides are involved in the degradation of these compounds and in their utilization as carbon and energy sources, or in the rescue of pyrimidine bases for nucleotide synthesis. This chain is Thymidine phosphorylase, found in Sinorhizobium fredii (strain NBRC 101917 / NGR234).